The following is a 406-amino-acid chain: Phosphorylase b kinase gamma catalytic chain, liver/testis isoform (406 aa).

The Protein kinase domain occupies Tyr24 to Phe291. ATP contacts are provided by residues Ile30 to Val38 and Lys53. Residue Asp153 is the Proton acceptor of the active site. Positions Gln306–Pro330 are calmodulin-binding (domain-N). Residues Val346–Arg370 form a calmodulin-binding (domain-C) region.

It belongs to the protein kinase superfamily. CAMK Ser/Thr protein kinase family. As to quaternary structure, hexadecamer of 4 heterotetramers, each composed of alpha, beta, gamma, and delta subunits. Alpha (PHKA1 or PHKA2) and beta (PHKB) are regulatory subunits, gamma (PHKG1 or PHKG2) is the catalytic subunit, and delta is calmodulin.

The catalysed reaction is 2 ATP + phosphorylase b = 2 ADP + phosphorylase a.. In terms of biological role, catalytic subunit of the phosphorylase b kinase (PHK), which mediates the neural and hormonal regulation of glycogen breakdown (glycogenolysis) by phosphorylating and thereby activating glycogen phosphorylase. May regulate glycogeneolysis in the testis. In vitro, phosphorylates PYGM. This chain is Phosphorylase b kinase gamma catalytic chain, liver/testis isoform (Phkg2), found in Rattus norvegicus (Rat).